The sequence spans 156 residues: ATP synthase subunit b (156 aa).

The helical transmembrane segment at 3 to 23 (ITFTIFAQSLAFAALIWIVAT) threads the bilayer.

The protein belongs to the ATPase B chain family. F-type ATPases have 2 components, F(1) - the catalytic core - and F(0) - the membrane proton channel. F(1) has five subunits: alpha(3), beta(3), gamma(1), delta(1), epsilon(1). F(0) has three main subunits: a(1), b(2) and c(10-14). The alpha and beta chains form an alternating ring which encloses part of the gamma chain. F(1) is attached to F(0) by a central stalk formed by the gamma and epsilon chains, while a peripheral stalk is formed by the delta and b chains.

The protein localises to the cell inner membrane. Functionally, f(1)F(0) ATP synthase produces ATP from ADP in the presence of a proton or sodium gradient. F-type ATPases consist of two structural domains, F(1) containing the extramembraneous catalytic core and F(0) containing the membrane proton channel, linked together by a central stalk and a peripheral stalk. During catalysis, ATP synthesis in the catalytic domain of F(1) is coupled via a rotary mechanism of the central stalk subunits to proton translocation. Its function is as follows. Component of the F(0) channel, it forms part of the peripheral stalk, linking F(1) to F(0). In Xylella fastidiosa (strain 9a5c), this protein is ATP synthase subunit b.